Reading from the N-terminus, the 880-residue chain is Potassium transport protein 2 (880 aa).

N9 carries an N-linked (GlcNAc...) asparagine glycan. 2 consecutive transmembrane segments (helical) span residues 28 to 48 and 84 to 104; these read FVQD…LYGS and TILL…LTLF. The tract at residues 157–182 is disordered; the sequence is MHRPVAPETKAEEAEHQENEKHHRHH. Residues 165 to 177 are compositionally biased toward basic and acidic residues; the sequence is TKAEEAEHQENEK. 7 N-linked (GlcNAc...) asparagine glycosylation sites follow: N239, N283, N293, N294, N321, N443, and N460. Residues 289–315 show a composition bias toward polar residues; the sequence is HHLDNNSSISSHNPSLETANDGNQETV. Positions 289 to 344 are disordered; that stretch reads HHLDNNSSISSHNPSLETANDGNQETVSSSNSNYSTTRVDNDPHVASYSPQNSNFD. Residues 316–325 are compositionally biased toward low complexity; the sequence is SSSNSNYSTT. 6 helical membrane passes run 494-514, 571-591, 625-645, 684-704, 756-776, and 787-807; these read ILVV…LIFI, LIFL…WIMI, WVLF…FMVL, IAPA…YPIA, QLSH…IVEG, and FTLF…GLSL. Residues 857 to 880 form a disordered region; sequence REEEDYMRRHGKKNTNRADPVPSS.

It belongs to the TrkH potassium transport family.

The protein localises to the cell membrane. In terms of biological role, together with TRK1, defines the major, high-affinity potassium influx transport system. Involved in maintenance of the proper sodium/potassium ratio in the cell and in regulating the plasma membrane potential. The protein is Potassium transport protein 2 (trk2) of Schizosaccharomyces pombe (strain 972 / ATCC 24843) (Fission yeast).